Consider the following 456-residue polypeptide: Cysteine synthase 2 (456 aa).

A helical membrane pass occupies residues 9 to 29; the sequence is VYGTVALTAAFAAGILVTLGF.

The protein belongs to the cysteine synthase/cystathionine beta-synthase family. Pyridoxal 5'-phosphate serves as cofactor.

The protein localises to the mitochondrion outer membrane. It catalyses the reaction O-acetyl-L-serine + hydrogen sulfide = L-cysteine + acetate. Its function is as follows. Putative cysteine synthase that catalyzes the conversion of O-acetyl-L-serine (OAS) into cysteine, the last step in the cysteine biosynthesis pathway. However, in contrast to cysteine synthase cys-17, this CS-like protein may not function in cysteine biosynthesis. The polypeptide is Cysteine synthase 2 (Neurospora crassa (strain ATCC 24698 / 74-OR23-1A / CBS 708.71 / DSM 1257 / FGSC 987)).